The following is a 251-amino-acid chain: Uridylate kinase (251 aa).

26–29 (KLGG) is an ATP binding site. G67 serves as a coordination point for UMP. The ATP site is built by G68 and R72. UMP is bound by residues D87 and 148-155 (MGLPYFST). ATP-binding residues include F181 and D184.

It belongs to the UMP kinase family. As to quaternary structure, homohexamer.

It localises to the cytoplasm. It catalyses the reaction UMP + ATP = UDP + ADP. The protein operates within pyrimidine metabolism; CTP biosynthesis via de novo pathway; UDP from UMP (UMPK route): step 1/1. With respect to regulation, inhibited by UTP. Functionally, catalyzes the reversible phosphorylation of UMP to UDP. The sequence is that of Uridylate kinase from Mycolicibacterium vanbaalenii (strain DSM 7251 / JCM 13017 / BCRC 16820 / KCTC 9966 / NRRL B-24157 / PYR-1) (Mycobacterium vanbaalenii).